We begin with the raw amino-acid sequence, 327 residues long: Malate dehydrogenase (327 aa).

An NAD(+)-binding site is contributed by 12–18 (GAAGQIG). Substrate contacts are provided by Arg93 and Arg99. NAD(+) contacts are provided by residues Asn106, Gln113, and 130–132 (VGN). Positions 132 and 163 each coordinate substrate. His188 (proton acceptor) is an active-site residue.

Belongs to the LDH/MDH superfamily. MDH type 2 family.

The enzyme catalyses (S)-malate + NAD(+) = oxaloacetate + NADH + H(+). Its function is as follows. Catalyzes the reversible oxidation of malate to oxaloacetate. This Paraburkholderia phymatum (strain DSM 17167 / CIP 108236 / LMG 21445 / STM815) (Burkholderia phymatum) protein is Malate dehydrogenase.